Reading from the N-terminus, the 2570-residue chain is Highly reducing polyketide synthase tstA (2570 aa).

Residues 16–443 (AMPIAVVGIG…GANAHVVLEN (428 aa)) enclose the Ketosynthase family 3 (KS3) domain. Active-site for beta-ketoacyl synthase activity residues include Cys191, His326, and His366. Residues 458 to 478 (HTRKSATESSGTSTPSNPGPH) form a disordered region. The segment covering 464–478 (TESSGTSTPSNPGPH) has biased composition (low complexity). Residues 567–898 (FVFTGQGAQW…YSALVRNKNA (332 aa)) form the Malonyl-CoA:ACP transacylase (MAT) domain. The N-terminal hotdog fold stretch occupies residues 965-1103 (TDLLGVLERN…GLVSVVAPQK (139 aa)). Residues 965–1293 (TDLLGVLERN…CATLAREGAD (329 aa)) form the PKS/mFAS DH domain. His997 acts as the Proton acceptor; for dehydratase activity in catalysis. The tract at residues 1133 to 1293 (RRNINVPQFY…CATLAREGAD (161 aa)) is C-terminal hotdog fold. Asp1198 acts as the Proton donor; for dehydratase activity in catalysis. The interval 1343–1645 (LERAAYYMLK…IATSINSNNY (303 aa)) is methyltransferase (CMeT) domain. Residues 1866–2178 (GLLDSIFWTD…TGGHMGKLVG (313 aa)) enclose the Enoyl reductase (ER) domain. One can recognise a Ketoreductase (KR) domain in the interval 2202-2379 (ASYVLIGGLG…ATTIDLGAIS (178 aa)). The Carrier domain maps to 2482 to 2559 (DASELILGAL…HLATKIAQRS (78 aa)). Ser2519 is modified (O-(pantetheine 4'-phosphoryl)serine).

Pantetheine 4'-phosphate serves as cofactor.

Its pathway is secondary metabolite biosynthesis. Its function is as follows. Highly reducing polyketide synthase; part of the gene cluster that mediates the biosynthesis of the antihypercholesterolemic agents phomoidrides which are dimeric anhydrides. The pathway begins with the highly reducing polyketide synthase tstA that catalyzes the formation of a C12-fatty acyl-ACP, starting from one acetate and 5 malonate units. The hydrolase tstM is involved in the release of the C12-fatty acyl chain from tstA. The alkylcitrate synthase (ACS) tstJ and the alkylcitrate dehydratase (ACDH) tstI then give rise to decarboxylated monomeric anhydrides by coupling the C12-fatty acyl chain with oxalacetic acid. The cyclase tstC is responsible for the dimerization of the monomeric anhydrides which leads to the production of prephomoidride that contains the characteristic bicyclo[4.3.1]deca-1,6-diene system of phomoidrides. Iterative oxidation catalyzed by the alpha-ketoglutarate-dependent dioxygenase tstK produced then phomoidride A. Finally, the methyltransferase tstE converts phomoidride A to phomoidride B via an acetalization reaction. The phosphatidylethanolamine-binding protein tstB and tstN are not essential for dimerization and their functions have still to be determined. This is Highly reducing polyketide synthase tstA from Talaromyces stipitatus (strain ATCC 10500 / CBS 375.48 / QM 6759 / NRRL 1006) (Penicillium stipitatum).